We begin with the raw amino-acid sequence, 388 residues long: Succinate--CoA ligase [ADP-forming] subunit beta (388 aa).

Residues K9–K245 enclose the ATP-grasp domain. Residues K46, G53 to G55, E100, Y103, and E108 each bind ATP. Mg(2+) contacts are provided by N200 and D214. Substrate contacts are provided by residues N265 and G322–V324.

The protein belongs to the succinate/malate CoA ligase beta subunit family. As to quaternary structure, heterotetramer of two alpha and two beta subunits. Mg(2+) serves as cofactor.

The catalysed reaction is succinate + ATP + CoA = succinyl-CoA + ADP + phosphate. It catalyses the reaction GTP + succinate + CoA = succinyl-CoA + GDP + phosphate. It participates in carbohydrate metabolism; tricarboxylic acid cycle; succinate from succinyl-CoA (ligase route): step 1/1. Its function is as follows. Succinyl-CoA synthetase functions in the citric acid cycle (TCA), coupling the hydrolysis of succinyl-CoA to the synthesis of either ATP or GTP and thus represents the only step of substrate-level phosphorylation in the TCA. The beta subunit provides nucleotide specificity of the enzyme and binds the substrate succinate, while the binding sites for coenzyme A and phosphate are found in the alpha subunit. The sequence is that of Succinate--CoA ligase [ADP-forming] subunit beta from Neisseria meningitidis serogroup C / serotype 2a (strain ATCC 700532 / DSM 15464 / FAM18).